The chain runs to 247 residues: MNERIAILSAYSFVNIIEPANLIPKFLLIGKKKYIRGTILLANEGFNCSFSGSYENVNLVLKQLIELTGSKDVNVKINYSSVHPFQKLKVRLKKEIIAMNVKDLNIEVFKGDYIEPKDWDEFITKQNVIVIDTRNEYEIDIGTFKSAINPRTETFKQFPAWVQQNQALLQGKKIAMFCTGGIRCEKSTSLLKSIGYNEVYHLKGGILQYLEDTHNKNNLWQGKCFVFDDRRAIMDDLSPAEGYWLHR.

The 95-residue stretch at 124-218 folds into the Rhodanese domain; that stretch reads TKQNVIVIDT…YLEDTHNKNN (95 aa). Cys-178 serves as the catalytic Cysteine persulfide intermediate.

The protein belongs to the TrhO family.

The enzyme catalyses uridine(34) in tRNA + AH2 + O2 = 5-hydroxyuridine(34) in tRNA + A + H2O. Functionally, catalyzes oxygen-dependent 5-hydroxyuridine (ho5U) modification at position 34 in tRNAs. This is tRNA uridine(34) hydroxylase from Rickettsia typhi (strain ATCC VR-144 / Wilmington).